We begin with the raw amino-acid sequence, 285 residues long: uncharacterized protein (285 aa).

The interval 1–25 (MANQKKKTLPPQHQNQQPGFEYLMD) is disordered. Position 45-69 (45-69 (IITGGDSGIGRAVSVLFAKEGANVV)) interacts with NADP(+). Ser177 contacts substrate. Tyr190 acts as the Proton acceptor in catalysis.

This sequence belongs to the short-chain dehydrogenases/reductases (SDR) family.

This is an uncharacterized protein from Bacillus subtilis (strain 168).